The chain runs to 131 residues: Interleukin-13 (131 aa).

The N-terminal stretch at 1-18 is a signal peptide; sequence MALWVTAVLALACLGGLA. N-linked (GlcNAc...) asparagine glycans are attached at residues Asn42, Asn52, and Asn75. Disulfide bonds link Cys51–Cys79 and Cys67–Cys93.

The protein belongs to the IL-4/IL-13 family. Interacts with IL13RA2.

It localises to the secreted. Cytokine that plays important roles in allergic inflammation and immune response to parasite infection. Synergizes with IL2 in regulating interferon-gamma synthesis. Stimulates B-cell proliferation, and activation of eosinophils, basophils, and mast cells. Plays an important role in controlling IL33 activity by modulating the production of transmembrane and soluble forms of interleukin-1 receptor-like 1/IL1RL1. Displays the capacity to antagonize Th1-driven proinflammatory immune response and downregulates synthesis of many proinflammatory cytokines including IL1, IL6, IL10, IL12 and TNF-alpha through a mechanism that partially involves suppression of NF-kappa-B. Also functions on nonhematopoietic cells, including endothelial cells where it induces vascular cell adhesion protein 1/VCAM1, which is important in the recruitment of eosinophils. Exerts its biological effects through its receptors which comprises the IL4R chain and the IL13RA1 chain, to activate JAK1 and TYK2, leading to the activation of STAT6. Aside from IL13RA1, another receptor IL13RA2 acts as a high affinity decoy for IL13 and mediates internalization and depletion of extracellular IL13. The chain is Interleukin-13 (Il13) from Mus musculus (Mouse).